Consider the following 197-residue polypeptide: Shikimate kinase (197 aa).

14 to 19 (GSGKST) serves as a coordination point for ATP. Residue Ser-18 coordinates Mg(2+). The substrate site is built by Asp-36, Arg-60, and Gly-82. Arg-120 is an ATP binding site. Substrate is bound at residue Arg-147.

Belongs to the shikimate kinase family. As to quaternary structure, monomer. Mg(2+) serves as cofactor.

The protein localises to the cytoplasm. The enzyme catalyses shikimate + ATP = 3-phosphoshikimate + ADP + H(+). It functions in the pathway metabolic intermediate biosynthesis; chorismate biosynthesis; chorismate from D-erythrose 4-phosphate and phosphoenolpyruvate: step 5/7. Its function is as follows. Catalyzes the specific phosphorylation of the 3-hydroxyl group of shikimic acid using ATP as a cosubstrate. This Prosthecochloris aestuarii (strain DSM 271 / SK 413) protein is Shikimate kinase.